A 126-amino-acid chain; its full sequence is Fluoride-specific ion channel FluC (126 aa).

The next 4 membrane-spanning stretches (helical) occupy residues 4–24 (PLLS…FLGL), 33–53 (IPLG…FAMA), 67–87 (FVIT…IEIV), and 97–117 (MAML…CLGL). Gly-74 and Thr-77 together coordinate Na(+).

This sequence belongs to the fluoride channel Fluc/FEX (TC 1.A.43) family.

The protein resides in the cell inner membrane. It catalyses the reaction fluoride(in) = fluoride(out). With respect to regulation, na(+) is not transported, but it plays an essential structural role and its presence is essential for fluoride channel function. Fluoride-specific ion channel. Important for reducing fluoride concentration in the cell, thus reducing its toxicity. This chain is Fluoride-specific ion channel FluC, found in Acinetobacter baumannii (strain AB307-0294).